A 604-amino-acid chain; its full sequence is Elongation factor 4 (604 aa).

The 183-residue stretch at 2-184 (DHIRNFSIIA…AVITRMPAPR (183 aa)) folds into the tr-type G domain. GTP-binding positions include 14-19 (DHGKST) and 131-134 (NKMD).

It belongs to the TRAFAC class translation factor GTPase superfamily. Classic translation factor GTPase family. LepA subfamily.

Its subcellular location is the cell inner membrane. It carries out the reaction GTP + H2O = GDP + phosphate + H(+). Functionally, required for accurate and efficient protein synthesis under certain stress conditions. May act as a fidelity factor of the translation reaction, by catalyzing a one-codon backward translocation of tRNAs on improperly translocated ribosomes. Back-translocation proceeds from a post-translocation (POST) complex to a pre-translocation (PRE) complex, thus giving elongation factor G a second chance to translocate the tRNAs correctly. Binds to ribosomes in a GTP-dependent manner. The chain is Elongation factor 4 from Methylibium petroleiphilum (strain ATCC BAA-1232 / LMG 22953 / PM1).